The chain runs to 108 residues: TYRO protein tyrosine kinase-binding protein (108 aa).

The signal sequence occupies residues 1–25 (MEGLRPSDRLLSLLLTVGGLSLVLA). The Extracellular segment spans residues 26–36 (QSECNCSSVSP). The helical transmembrane segment at 37 to 57 (GVLAGIVLGDLMLTLLIALAV) threads the bilayer. Position 46 (aspartate 46) interacts with Ca(2+). At 58–108 (YYLGRLVPRGRGATEVTRKQHIPETESPYQELQGQRTDVYSDLNTQRPYYK) the chain is on the cytoplasmic side. Positions 71 to 108 (TEVTRKQHIPETESPYQELQGQRTDVYSDLNTQRPYYK) are disordered. The 29-residue stretch at 75 to 103 (RKQHIPETESPYQELQGQRTDVYSDLNTQ) folds into the ITAM domain. A compositionally biased stretch (polar residues) spans 84–108 (SPYQELQGQRTDVYSDLNTQRPYYK). Tyrosine 86 and tyrosine 97 each carry phosphotyrosine.

This sequence belongs to the TYROBP family. Homodimer; disulfide-linked. Homotrimer; disulfide-linked. Homotetramer; disulfide-linked. Homotrimers and homotetramers form when low levels of partner receptors are available and is competitive with assembly with interacting receptors. They may represent alternative oligomerization states or may be intermediates in the receptor assembly process. Binding of a metal cation aids in homooligomerization through coordination of the metal ion by the subunits of the oligomer. Interacts with TREM1. Interacts with TREM2. Interacts with CLECSF5. Interacts with CD300LB and CD300C2. Interacts with CD300E. Interacts (via ITAM domain) with SYK (via SH2 domains); activates SYK mediating neutrophils and macrophages integrin-mediated activation. Interacts with KLRC2. Interacts with CD300H. Interacts with KLRD1. Interacts with SIGLEC1. In terms of processing, following ligand binding by associated receptors, tyrosine phosphorylated in the ITAM domain which leads to activation of additional tyrosine kinases and subsequent cell activation.

It is found in the cell membrane. Its function is as follows. Adapter protein which non-covalently associates with activating receptors found on the surface of a variety of immune cells to mediate signaling and cell activation following ligand binding by the receptors. TYROBP is tyrosine-phosphorylated in the ITAM domain following ligand binding by the associated receptors which leads to activation of additional tyrosine kinases and subsequent cell activation. Also has an inhibitory role in some cells. Non-covalently associates with activating receptors of the CD300 family to mediate cell activation. Also mediates cell activation through association with activating receptors of the CD200R family. Required for neutrophil activation mediated by integrin. Required for the activation of myeloid cells mediated by the CLEC5A/MDL1 receptor. Associates with natural killer (NK) cell receptors such as the KLRD1/KLRC2 heterodimer to mediate NK cell activation. Associates with TREM1 to mediate activation of neutrophils and monocytes. Associates with TREM2 on monocyte-derived dendritic cells to mediate up-regulation of chemokine receptor CCR7 and dendritic cell maturation and survival. Association with TREM2 mediates cytokine-induced formation of multinucleated giant cells which are formed by the fusion of macrophages. Stabilizes the TREM2 C-terminal fragment (TREM2-CTF) produced by TREM2 ectodomain shedding which suppresses the release of pro-inflammatory cytokines. In microglia, required with TREM2 for phagocytosis of apoptotic neurons. Required with ITGAM/CD11B in microglia to control production of microglial superoxide ions which promote the neuronal apoptosis that occurs during brain development. Promotes pro-inflammatory responses in microglia following nerve injury which accelerates degeneration of injured neurons. Positively regulates the expression of the IRAK3/IRAK-M kinase and IL10 production by liver dendritic cells and inhibits their T cell allosimulatory ability. Negatively regulates B cell proliferation. Required for CSF1-mediated osteoclast cytoskeletal organization. Positively regulates multinucleation during osteoclast development. This Bos taurus (Bovine) protein is TYRO protein tyrosine kinase-binding protein.